A 169-amino-acid chain; its full sequence is MPLLDSFTVDHTRMNAPAVRVAKHMSTPSGDAITVFDLRFCAPNKDILSERGIHTLEHLFAGFMREHLNGDGIEIIDISPMGCRTGFYMSLIGQPTESKVADSWLAAMVDVTNVIDQKDIPELNEYQCGTYEMHSLEQAQDIARMIIAAGVSVNQNDDLKLSDEILGNL.

Residues His54, His58, and Cys128 each coordinate Fe cation.

Belongs to the LuxS family. As to quaternary structure, homodimer. The cofactor is Fe cation.

It carries out the reaction S-(5-deoxy-D-ribos-5-yl)-L-homocysteine = (S)-4,5-dihydroxypentane-2,3-dione + L-homocysteine. Its function is as follows. Involved in the synthesis of autoinducer 2 (AI-2) which is secreted by bacteria and is used to communicate both the cell density and the metabolic potential of the environment. The regulation of gene expression in response to changes in cell density is called quorum sensing. Catalyzes the transformation of S-ribosylhomocysteine (RHC) to homocysteine (HC) and 4,5-dihydroxy-2,3-pentadione (DPD). This Shewanella frigidimarina (strain NCIMB 400) protein is S-ribosylhomocysteine lyase.